Consider the following 102-residue polypeptide: Small ribosomal subunit protein uS10 (102 aa).

It belongs to the universal ribosomal protein uS10 family. As to quaternary structure, part of the 30S ribosomal subunit.

Functionally, involved in the binding of tRNA to the ribosomes. This is Small ribosomal subunit protein uS10 from Streptococcus pneumoniae (strain CGSP14).